A 249-amino-acid chain; its full sequence is MVDFRKFYKENANVAYTVLGYPNLQTSEAFLQRLDQSPIDILELGVAYSDPIADGEIIADAAKIALDQGMDIHSVFELLARIKTKKALVFMVYYNLIFSYGLEKFVKKAKSLGICALIVPELSFEESDDLIKECERYNIALITLVSVTTPKERVKKLVKHAKGFIYLLASIGITGTKSVEEAILQDKVKEIRSFTNLPIFVGFGIQNNQDVKRMRKVADGVIVGTSIVKCFKQGNLDIIMKDIEEIFKK.

Catalysis depends on proton acceptor residues glutamate 43 and aspartate 54.

It belongs to the TrpA family. As to quaternary structure, tetramer of two alpha and two beta chains.

It catalyses the reaction (1S,2R)-1-C-(indol-3-yl)glycerol 3-phosphate + L-serine = D-glyceraldehyde 3-phosphate + L-tryptophan + H2O. It functions in the pathway amino-acid biosynthesis; L-tryptophan biosynthesis; L-tryptophan from chorismate: step 5/5. The alpha subunit is responsible for the aldol cleavage of indoleglycerol phosphate to indole and glyceraldehyde 3-phosphate. This Campylobacter jejuni subsp. jejuni serotype O:23/36 (strain 81-176) protein is Tryptophan synthase alpha chain.